We begin with the raw amino-acid sequence, 826 residues long: Ubiquitin carboxyl-terminal hydrolase 16 (826 aa).

The interval Met-1–Met-23 is disordered. A UBP-type zinc finger spans residues Pro-22–Ala-141. Residues Cys-24, His-26, Cys-48, Cys-51, Cys-73, Cys-76, Cys-81, His-89, His-93, His-102, Cys-115, and Cys-118 each coordinate Zn(2+). Lys-139 participates in a covalent cross-link: Glycyl lysine isopeptide (Lys-Gly) (interchain with G-Cter in SUMO2). The disordered stretch occupies residues Thr-145–Ile-184. The span at Pro-148 to Ala-180 shows a compositional bias: basic and acidic residues. Ser-188 is modified (phosphoserine). The USP domain maps to Lys-195 to Ile-825. Cys-204 serves as the catalytic Nucleophile. Residues Gln-392–Met-407 show a composition bias toward basic and acidic residues. Disordered regions lie at residues Gln-392 to Gln-456 and Ala-526 to Pro-553. Over residues Glu-408–Asp-419 the composition is skewed to acidic residues. Ser-414 bears the Phosphoserine mark. Over residues His-436–Gln-456 the composition is skewed to basic residues. The segment covering Ala-526–Val-537 has biased composition (basic and acidic residues). The segment covering Ser-539–Ser-551 has biased composition (polar residues). His-760 (proton acceptor) is an active-site residue.

This sequence belongs to the peptidase C19 family. USP16 subfamily. Homotetramer. Associates with late pre-40S ribosomes. Interacts with CEP78; promoting deubiquitination of tektins. Post-translationally, phosphorylated at the onset of mitosis and dephosphorylated during the metaphase/anaphase transition. Phosphorylation by AURKB enhances the deubiquitinase activity.

The protein localises to the nucleus. It catalyses the reaction Thiol-dependent hydrolysis of ester, thioester, amide, peptide and isopeptide bonds formed by the C-terminal Gly of ubiquitin (a 76-residue protein attached to proteins as an intracellular targeting signal).. Functionally, specifically deubiquitinates 'Lys-120' of histone H2A (H2AK119Ub), a specific tag for epigenetic transcriptional repression, thereby acting as a coactivator. Deubiquitination of histone H2A is a prerequisite for subsequent phosphorylation at 'Ser-11' of histone H3 (H3S10ph), and is required for chromosome segregation when cells enter into mitosis. In resting B- and T-lymphocytes, phosphorylation by AURKB leads to enhance its activity, thereby maintaining transcription in resting lymphocytes. Regulates Hox gene expression via histone H2A deubiquitination. Prefers nucleosomal substrates. Does not deubiquitinate histone H2B. Also deubiquitinates non-histone proteins, such as ribosomal protein RPS27A: deubiquitination of monoubiquitinated RPS27A promotes maturation of the 40S ribosomal subunit. Also mediates deubiquitination of tektin proteins (TEKT1, TEKT2, TEK3, TEKT4 and TEKT5), promoting their stability. In Rattus norvegicus (Rat), this protein is Ubiquitin carboxyl-terminal hydrolase 16 (Usp16).